The chain runs to 452 residues: Class E vacuolar protein-sorting machinery protein HSE1 (452 aa).

At serine 2 the chain carries N-acetylserine. The region spanning alanine 15–valine 145 is the VHS domain. 2 disordered regions span residues leucine 144–glutamate 166 and glutamine 187–lysine 212. A Phosphoserine modification is found at serine 162. Residues serine 162–glutamine 181 form the UIM domain. Over residues glutamine 197–glutamine 207 the composition is skewed to low complexity. The region spanning threonine 217 to glutamate 276 is the SH3 domain. The tract at residues alanine 389–glutamine 452 is disordered. Over residues histidine 393–glutamine 433 the composition is skewed to polar residues.

This sequence belongs to the STAM family. As to quaternary structure, component of the ESCRT-0 complex composed of HSE1 and VPS27. Interacts with the ESCRT-I subunit VPS23, the UBP7 deubiquitinase and the E3 ligase RSP5. May form a complex composed of VPS27, HSE1 and DOA1. Interacts (via SH3 domain) with DOA1.

The protein localises to the endosome membrane. Its function is as follows. Component of the ESCRT-0 complex which is the sorting receptor for ubiquitinated cargo proteins at the multivesicular body (MVB) and recruits ESCRT-I to the MVB outer membrane. The chain is Class E vacuolar protein-sorting machinery protein HSE1 (HSE1) from Saccharomyces cerevisiae (strain ATCC 204508 / S288c) (Baker's yeast).